The sequence spans 506 residues: Galactose/methyl galactoside import ATP-binding protein MglA (506 aa).

ABC transporter domains follow at residues 14-249 (LEMS…VGRS) and 264-506 (VILE…SLHL). Residue 46–53 (GENGAGKS) coordinates ATP.

This sequence belongs to the ABC transporter superfamily. Galactose/methyl galactoside importer (TC 3.A.1.2.3) family. In terms of assembly, the complex is composed of one ATP-binding protein (MglA), two transmembrane proteins (MglC) and a solute-binding protein (MglB).

It localises to the cell inner membrane. It carries out the reaction D-galactose(out) + ATP + H2O = D-galactose(in) + ADP + phosphate + H(+). It catalyses the reaction methyl beta-D-galactoside(out) + ATP + H2O = methyl beta-D-galactoside(in) + ADP + phosphate + H(+). Part of the ABC transporter complex MglABC involved in galactose/methyl galactoside import. Responsible for energy coupling to the transport system. The polypeptide is Galactose/methyl galactoside import ATP-binding protein MglA (Escherichia coli (strain K12)).